The following is a 1300-amino-acid chain: CRISPR-associated endonuclease Cas12a (1300 aa).

The segment at 1–24 (MSIYQEFVNKYSLSKTLRFELIPQ) is wedge region 1. Recognition domain regions lie at residues 25–339 (GKTL…SFVI) and 340–591 (DKLE…QKPY). 2 binds crRNA alone and in crRNA-target DNA heteroduplex regions span residues 47–51 (YKKAK) and 182–186 (FHENR). Residues 301–305 (NEYIN) form a binds DNA in crRNA-target DNA heteroduplex region. 2 binds crRNA in crRNA-target DNA heteroduplex regions span residues 326–329 (KQIL) and 538–541 (HKLK). Residues 591-595 (YSDEK) are binds crRNA. The interval 592–662 (SDEKFKLNFE…GYKKIVYKLL (71 aa)) is wedge region 2. Residues 662–679 (LPGANKMLPKVFFSAKSI) form an LKL, important for PAM recognition and DNA unwinding region. Positions 663-762 (PGANKMLPKV…FYREVENQGY (100 aa)) are PAM-interacting domain (PI). Positions 671-677 (KVFFSAK) are binds DNA protospacer adjacent motif (PAM) on target DNA. The tract at residues 692–704 (RNHSTHTKNGSPQ) is binds single-strand non-target DNA. The tract at residues 763–892 (KLTFENISES…PITINFKSSG (130 aa)) is wedge region 3. Binds crRNA regions lie at residues 791–794 (KDFS) and 803–804 (LH). Active-site for pre-crRNA processing residues include His843, Lys852, and Lys869. Binds crRNA stretches follow at residues 851-853 (NKN) and 865-873 (YDLIKDKRF). Residues 893-953 (ANKFNDEINL…IGNDRMKTNY (61 aa)) are ruvC-I. The active-site For DNase activity of RuvC domain is Asp917. The tract at residues 954–971 (HDKLAAIEKDRDSARKDW) is bridge helix. The tract at residues 972 to 1078 (KKINNIKEMK…KQTGIIYYVP (107 aa)) is ruvC-II. Catalysis depends on Glu1006, which acts as the For DNase activity of RuvC domain. The tract at residues 1079-1254 (AGFTSKICPV…QAPKNMPQDA (176 aa)) is nuclease domain. Catalysis depends on Asp1255, which acts as the For DNase activity of RuvC domain. The interval 1255-1300 (DANGAYHIGLKGLMLLGRIKNNQEGKKLNLVIKNEEYFEFVQNRNN) is ruvC-III.

The protein belongs to the CRISPR-associated endonuclease Cas12a family. As to quaternary structure, might be a homodimer. Might be a monomer. Ca(2+) is required as a cofactor. The cofactor is Mg(2+).

The catalysed reaction is Endonucleolytic cleavage to 5'-phosphodinucleotide and 5'-phosphooligonucleotide end-products.. The enzyme catalyses RNA = a 5'-hydroxy-ribonucleotide + n nucleoside-2',3'-cyclophosphates.. In terms of biological role, CRISPR (clustered regularly interspaced short palindromic repeat), is an adaptive immune system that provides protection against mobile genetic elements (viruses, transposable elements and conjugative plasmids). CRISPR clusters contain sequences complementary to antecedent mobile elements and target invading nucleic acids. CRISPR clusters are transcribed and processed into CRISPR RNA (crRNA). Has endonuclease activity on pre-crRNA and dsDNA, using different active sites. A single-RNA guided endonuclease that is also capable of guiding crRNA processing; correct processing of pre-crRNA requires only this protein and the CRISPR locus. pre-crRNA processing proceeds by an intramolecular nucleophilic attack on the scissile phosphate by the 2'-OH of the upstream ribonucleotide, the divalent cation (which is bound by the crRNA) is probably required for ordering the crRNA pseudoknot and/or increasing RNA binding. RNA mutagenesis studies show pre-crRNA cleavage is highly sequence- and structure-specific. Forms a complex with crRNA and complementary dsDNA, where the crRNA displaces the non-target DNA strand and directs endonucleolytic cleavage of both strands of the DNA. Cleavage results in staggered 5-base 5' overhangs 14-18 and 21-23 bases downstream of the PAM (protospacer adjacent motif) on the non-target and target strands respectively. Both target and non-target strand DNA are probably independently cleaved in the same active site. When this protein is expressed in E.coli it prevents plasmids homologous to the first CRISPR spacer from transforming, formally showing it is responsible for plasmid immunity. The chain is CRISPR-associated endonuclease Cas12a from Francisella tularensis subsp. novicida (strain U112).